We begin with the raw amino-acid sequence, 356 residues long: NAC domain-containing protein JA2L (356 aa).

In terms of domain architecture, NAC spans 14 to 162 (LPPGFRFYPT…DWVLCRIYKK (149 aa)). The DNA-binding element occupies 111–168 (VGIKKALVFYIGKAPKGTKTNWIMHEYRLSEPTTKTGSSRLDDWVLCRIYKKNSGGQK). The interval 163-191 (NSGGQKSSCSDLQNKDISHASSSSSSSQF) is disordered. The span at 164–174 (SGGQKSSCSDL) shows a compositional bias: polar residues.

Expressed in guard cells of the epidermis.

The protein resides in the nucleus. Functionally, transcription factor that acts downstream of MYC2 in the jasmonate-mediated response to Botrytis cinerea infection. With MYC2 forms a transcription module that regulates wounding-responsive genes. Involved in jasmonate- and coronatine-mediated stomatal reopening in response to Pseudomonas syringae pv tomato DC3000 infection. Regulates the expression of threonine deaminase 2 (TD2) through promoter binding. In Solanum lycopersicum (Tomato), this protein is NAC domain-containing protein JA2L.